A 650-amino-acid polypeptide reads, in one-letter code: NAC domain-containing protein 54 (650 aa).

Residues 6–156 (LPPGFRFHPT…AYALCRVFKK (151 aa)) enclose the NAC domain. The DNA-binding element occupies 105–162 (VGMKKTLVYYRGRAPHGSRTDWVMHEYRLDERECETDTGLQDAYALCRVFKKTAPGPK).

As to expression, expressed in leaves, roots and flowers.

The protein localises to the nucleus. In terms of biological role, transcription factor that functions as a regulator of the jasmonate (JA) signaling pathway. May regulate the expression of genes encoding JA biosynthetic enzymes, such as lipoxygenase 7 (CM-LOX1), allene oxide synthase 2 (AOS2) and OPDA reductase 7 (OPR7). Involved in abscisic acid-induced leaf senescence. Activates the abscisic acid (ABA) signaling-associated gene ABI5 and the senescence-associated gene NYC1 by directly binding to the mitochondrial dysfunction motif (MDM) present in their promoters. Possesses transcriptional activator activity in yeast. Required for the multiplication of the rice dwarf virus (RDV). This chain is NAC domain-containing protein 54, found in Oryza sativa subsp. japonica (Rice).